The chain runs to 363 residues: 4-hydroxy-2-oxovalerate aldolase 1 (363 aa).

A Pyruvate carboxyltransferase domain is found at 13-265 (VRMTDTSLRD…KTGIDFFDIA (253 aa)). Residue 21-22 (RD) participates in substrate binding. Asp-22 is a Mn(2+) binding site. His-25 acts as the Proton acceptor in catalysis. The substrate site is built by Ser-175 and His-204. Mn(2+) contacts are provided by His-204 and His-206. Substrate is bound at residue Tyr-295.

This sequence belongs to the 4-hydroxy-2-oxovalerate aldolase family.

The enzyme catalyses (S)-4-hydroxy-2-oxopentanoate = acetaldehyde + pyruvate. In Mycobacterium sp. (strain JLS), this protein is 4-hydroxy-2-oxovalerate aldolase 1.